Here is a 539-residue protein sequence, read N- to C-terminus: Chaperonin GroEL 1 (539 aa).

ATP is bound by residues T29–P32, D86–T90, G413, and D495.

Belongs to the chaperonin (HSP60) family. In terms of assembly, forms a cylinder of 14 subunits composed of two heptameric rings stacked back-to-back. Interacts with the co-chaperonin GroES.

The protein localises to the cytoplasm. It catalyses the reaction ATP + H2O + a folded polypeptide = ADP + phosphate + an unfolded polypeptide.. Its function is as follows. Together with its co-chaperonin GroES, plays an essential role in assisting protein folding. The GroEL-GroES system forms a nano-cage that allows encapsulation of the non-native substrate proteins and provides a physical environment optimized to promote and accelerate protein folding. In Mycobacterium bovis (strain ATCC BAA-935 / AF2122/97), this protein is Chaperonin GroEL 1.